The following is a 119-amino-acid chain: Non-specific lipid-transfer protein 12 (119 aa).

Residues 1-24 (MAFTPKIITCLIVLTIYMASPTES) form the signal peptide. Cystine bridges form between cysteine 28-cysteine 75, cysteine 38-cysteine 52, cysteine 53-cysteine 98, and cysteine 73-cysteine 112.

Belongs to the plant LTP family.

Functionally, plant non-specific lipid-transfer proteins transfer phospholipids as well as galactolipids across membranes. May play a role in wax or cutin deposition in the cell walls of expanding epidermal cells and certain secretory tissues. This Arabidopsis thaliana (Mouse-ear cress) protein is Non-specific lipid-transfer protein 12 (LTP12).